The chain runs to 563 residues: BOS complex subunit NCLN (563 aa).

The N-terminal stretch at 1-42 (MLEEAGEVLENVLKASCLPLGFIVFLPAVLLLVAPPLPAADA) is a signal peptide. Over 43–522 (AHEFTVYRMQ…VMNAYRVKPA (480 aa)) the chain is Lumenal. N241 and N428 each carry an N-linked (GlcNAc...) asparagine glycan. The helical transmembrane segment at 523 to 543 (IFDLLLALCIGAYLGMAYTAV) threads the bilayer. The Cytoplasmic portion of the chain corresponds to 544–563 (QHFHVLYKTVQRLLLKAKAQ).

It belongs to the nicastrin family. As to quaternary structure, component of the back of Sec61 (BOS) complex, composed of NCLN/Nicalin, NOMO1 and TMEM147. The BOS complex is part of the multi-pass translocon (MPT) complex, composed of three subcomplexes, the GEL complex (composed of RAB5IF/OPTI and TMCO1), the BOS complex (composed of NCLN/Nicalin, NOMO1 and TMEM147) and the PAT complex (composed of WDR83OS/Asterix and CCDC47). The MPT complex associates with the SEC61 complex.

The protein localises to the endoplasmic reticulum membrane. In terms of biological role, component of the multi-pass translocon (MPT) complex that mediates insertion of multi-pass membrane proteins into the lipid bilayer of membranes. The MPT complex takes over after the SEC61 complex: following membrane insertion of the first few transmembrane segments of proteins by the SEC61 complex, the MPT complex occludes the lateral gate of the SEC61 complex to promote insertion of subsequent transmembrane regions. May antagonize Nodal signaling and subsequent organization of axial structures during mesodermal patterning, via its interaction with NOMO. The chain is BOS complex subunit NCLN (Ncln) from Rattus norvegicus (Rat).